The chain runs to 91 residues: MPRSLKKGPFIDLHLLKKIEVAAEKNDRKPVKTWSRRSMILPQMVGLTIAVHNGRLHVPVLVNEDMVGHKLGEFAGTRTYRGHVADKKAKR.

This sequence belongs to the universal ribosomal protein uS19 family.

Functionally, protein S19 forms a complex with S13 that binds strongly to the 16S ribosomal RNA. This is Small ribosomal subunit protein uS19 from Pseudomonas fluorescens (strain SBW25).